The sequence spans 295 residues: Glutamyl-Q tRNA(Asp) synthetase (295 aa).

Residues 9–13 (RFAPT) and Glu-45 each bind L-glutamate. The 'HIGH' region signature appears at 12 to 22 (PTPSGYLHFGS). The Zn(2+) site is built by Cys-101, Cys-103, Tyr-115, and Cys-119. 2 residues coordinate L-glutamate: Tyr-172 and Arg-190. Residues 228–232 (KLGKS) carry the 'KMSKS' region motif. An ATP-binding site is contributed by Lys-231.

The protein belongs to the class-I aminoacyl-tRNA synthetase family. GluQ subfamily. The cofactor is Zn(2+).

Its function is as follows. Catalyzes the tRNA-independent activation of glutamate in presence of ATP and the subsequent transfer of glutamate onto a tRNA(Asp). Glutamate is transferred on the 2-amino-5-(4,5-dihydroxy-2-cyclopenten-1-yl) moiety of the queuosine in the wobble position of the QUC anticodon. This chain is Glutamyl-Q tRNA(Asp) synthetase, found in Pseudomonas syringae pv. tomato (strain ATCC BAA-871 / DC3000).